The chain runs to 385 residues: Circadian-associated transcriptional repressor (385 aa).

Over residues 1–26 (MDSPSSVSSYSSYSLSSSFPTSPVNS) the composition is skewed to low complexity. Disordered regions lie at residues 1–108 (MDSP…SLNT), 203–233 (GGGK…EKMD), and 365–385 (GHRE…LLNL). Basic and acidic residues predominate over residues 33-45 (DSEREDKGAHGPR). Residues 70–79 (VSGNQHTPSH) are compositionally biased toward polar residues.

As to quaternary structure, interacts with PER2, CRY2, BHLHE41, HDAC1 and NR3C1. Interacts with BMAL1.

It is found in the nucleus. The protein resides in the PML body. Its function is as follows. Transcriptional repressor which forms a negative regulatory component of the circadian clock and acts independently of the circadian transcriptional repressors: CRY1, CRY2 and BHLHE41. In a histone deacetylase-dependent manner represses the transcriptional activator activity of the CLOCK-BMAL1 heterodimer. Abrogates the interaction of BMAL1 with the transcriptional coactivator CREBBP and can repress the histone acetyl-transferase activity of the CLOCK-BMAL1 heterodimer, reducing histone acetylation of its target genes. Rhythmically binds the E-box elements (5'-CACGTG-3') on circadian gene promoters and its occupancy shows circadian oscillation antiphasic to BMAL1. Interacts with the glucocorticoid receptor (NR3C1) and contributes to the repressive function in the glucocorticoid response. The polypeptide is Circadian-associated transcriptional repressor (CIART) (Homo sapiens (Human)).